The sequence spans 393 residues: Metal tolerance protein A2 (393 aa).

At 1–72 the chain is on the cytoplasmic side; the sequence is MVTPKLHLDL…EAQERAASMR (72 aa). A helical membrane pass occupies residues 73-93; it reads KLLIAVLLCAIFIVVEVVGGI. The Vacuolar segment spans residues 94-105; the sequence is KANSLAILTDAA. Residues 106 to 126 traverse the membrane as a helical segment; that stretch reads HLLSDVAAFAISLFSLWASGW. The Cytoplasmic segment spans residues 127–138; that stretch reads KANPQQSYGFFR. Residues 139–159 form a helical membrane-spanning segment; it reads IEILGALVSIQMIWLLAGILV. Residues 160–176 lie on the Vacuolar side of the membrane; the sequence is YEAIVRLNNGSGEVEGS. Residues 177–197 form a helical membrane-spanning segment; the sequence is LMFAVSAVGLLVNIAMAILLG. Positions 198 to 233 are required for zinc-binding; that stretch reads HDHGHGHGHSHDNGHGHSHDHGHGIAATEHHHDSGH. Topologically, residues 198–257 are cytoplasmic; it reads HDHGHGHGHSHDNGHGHSHDHGHGIAATEHHHDSGHDESQLSDVLIEQKKQRNVNIQGAY. Over residues 202–236 the composition is skewed to basic and acidic residues; that stretch reads HGHGHSHDNGHGHSHDHGHGIAATEHHHDSGHDES. The disordered stretch occupies residues 202-237; sequence HGHGHSHDNGHGHSHDHGHGIAATEHHHDSGHDESQ. Residues 258–278 form a helical membrane-spanning segment; the sequence is LHVLGDSIQSVGVMIGGAIIW. The Vacuolar portion of the chain corresponds to 279–284; sequence YKPEWK. A helical transmembrane segment spans residues 285–305; that stretch reads ILDLICTLVFSVIVLGTTIGM. Over 306–393 the chain is Cytoplasmic; the sequence is LRNILEVLME…SHVTIQIERQ (88 aa).

This sequence belongs to the cation diffusion facilitator (CDF) transporter (TC 2.A.4) family. SLC30A subfamily.

The protein localises to the membrane. In terms of biological role, involved in sequestration of excess zinc in the cytoplasm into vacuoles to maintain zinc homeostasis. This is Metal tolerance protein A2 (MTPA2) from Arabidopsis thaliana (Mouse-ear cress).